The chain runs to 155 residues: 6,7-dimethyl-8-ribityllumazine synthase (155 aa).

5-amino-6-(D-ribitylamino)uracil-binding positions include phenylalanine 22, 56 to 58 (AFE), and 80 to 82 (AVI). 85 to 86 (AT) provides a ligand contact to (2S)-2-hydroxy-3-oxobutyl phosphate. The active-site Proton donor is the histidine 88. Phenylalanine 113 lines the 5-amino-6-(D-ribitylamino)uracil pocket. Arginine 127 provides a ligand contact to (2S)-2-hydroxy-3-oxobutyl phosphate.

The protein belongs to the DMRL synthase family.

It carries out the reaction (2S)-2-hydroxy-3-oxobutyl phosphate + 5-amino-6-(D-ribitylamino)uracil = 6,7-dimethyl-8-(1-D-ribityl)lumazine + phosphate + 2 H2O + H(+). The protein operates within cofactor biosynthesis; riboflavin biosynthesis; riboflavin from 2-hydroxy-3-oxobutyl phosphate and 5-amino-6-(D-ribitylamino)uracil: step 1/2. Functionally, catalyzes the formation of 6,7-dimethyl-8-ribityllumazine by condensation of 5-amino-6-(D-ribitylamino)uracil with 3,4-dihydroxy-2-butanone 4-phosphate. This is the penultimate step in the biosynthesis of riboflavin. The chain is 6,7-dimethyl-8-ribityllumazine synthase from Clostridium acetobutylicum (strain ATCC 824 / DSM 792 / JCM 1419 / IAM 19013 / LMG 5710 / NBRC 13948 / NRRL B-527 / VKM B-1787 / 2291 / W).